The primary structure comprises 254 residues: 5'-nucleotidase SurE (254 aa).

Residues D8, D9, S40, and N93 each contribute to the a divalent metal cation site.

This sequence belongs to the SurE nucleotidase family. The cofactor is a divalent metal cation.

It localises to the cytoplasm. It catalyses the reaction a ribonucleoside 5'-phosphate + H2O = a ribonucleoside + phosphate. In terms of biological role, nucleotidase that shows phosphatase activity on nucleoside 5'-monophosphates. The polypeptide is 5'-nucleotidase SurE (Methylorubrum extorquens (strain CM4 / NCIMB 13688) (Methylobacterium extorquens)).